A 243-amino-acid polypeptide reads, in one-letter code: 1-(5-phosphoribosyl)-5-[(5-phosphoribosylamino)methylideneamino] imidazole-4-carboxamide isomerase (243 aa).

Asp8 (proton acceptor) is an active-site residue. Asp129 functions as the Proton donor in the catalytic mechanism.

This sequence belongs to the HisA/HisF family.

The protein resides in the cytoplasm. It catalyses the reaction 1-(5-phospho-beta-D-ribosyl)-5-[(5-phospho-beta-D-ribosylamino)methylideneamino]imidazole-4-carboxamide = 5-[(5-phospho-1-deoxy-D-ribulos-1-ylimino)methylamino]-1-(5-phospho-beta-D-ribosyl)imidazole-4-carboxamide. It functions in the pathway amino-acid biosynthesis; L-histidine biosynthesis; L-histidine from 5-phospho-alpha-D-ribose 1-diphosphate: step 4/9. The protein is 1-(5-phosphoribosyl)-5-[(5-phosphoribosylamino)methylideneamino] imidazole-4-carboxamide isomerase of Parvibaculum lavamentivorans (strain DS-1 / DSM 13023 / NCIMB 13966).